We begin with the raw amino-acid sequence, 57 residues long: Large ribosomal subunit protein bL32B (57 aa).

The protein belongs to the bacterial ribosomal protein bL32 family.

The polypeptide is Large ribosomal subunit protein bL32B (Listeria welshimeri serovar 6b (strain ATCC 35897 / DSM 20650 / CCUG 15529 / CIP 8149 / NCTC 11857 / SLCC 5334 / V8)).